A 152-amino-acid polypeptide reads, in one-letter code: Aspartate carbamoyltransferase regulatory chain (152 aa).

Zn(2+) contacts are provided by Cys-109, Cys-114, Cys-138, and Cys-141.

The protein belongs to the PyrI family. In terms of assembly, contains catalytic and regulatory chains. It depends on Zn(2+) as a cofactor.

Functionally, involved in allosteric regulation of aspartate carbamoyltransferase. The chain is Aspartate carbamoyltransferase regulatory chain from Proteus mirabilis (strain HI4320).